Reading from the N-terminus, the 368-residue chain is Phospho-N-acetylmuramoyl-pentapeptide-transferase (368 aa).

The next 9 membrane-spanning stretches (helical) occupy residues 30-50 (AAAITALLISLMAGPWFIRYL), 72-92 (LPTMGGILIIFSIEVSVFLWA), 98-118 (HVWLVMLAIFWMGLIGFIDDY), 139-159 (ISLGLVIGLYTWFDPAFAVLL), 170-190 (LSIDYGIFYIPIVIFIITAVS), 201-221 (GLASGTTAIVVSALGAFSYLA), 238-258 (GGEIAVVCMAIVMACVGFLWF), 264-286 (EIIMGDTGSLALGSAVAVIALLI), and 345-365 (KIVIRFWIISILFFLTSLMTL).

Belongs to the glycosyltransferase 4 family. MraY subfamily. Mg(2+) is required as a cofactor.

Its subcellular location is the cell inner membrane. It catalyses the reaction UDP-N-acetyl-alpha-D-muramoyl-L-alanyl-gamma-D-glutamyl-meso-2,6-diaminopimeloyl-D-alanyl-D-alanine + di-trans,octa-cis-undecaprenyl phosphate = di-trans,octa-cis-undecaprenyl diphospho-N-acetyl-alpha-D-muramoyl-L-alanyl-D-glutamyl-meso-2,6-diaminopimeloyl-D-alanyl-D-alanine + UMP. It functions in the pathway cell wall biogenesis; peptidoglycan biosynthesis. In terms of biological role, catalyzes the initial step of the lipid cycle reactions in the biosynthesis of the cell wall peptidoglycan: transfers peptidoglycan precursor phospho-MurNAc-pentapeptide from UDP-MurNAc-pentapeptide onto the lipid carrier undecaprenyl phosphate, yielding undecaprenyl-pyrophosphoryl-MurNAc-pentapeptide, known as lipid I. The sequence is that of Phospho-N-acetylmuramoyl-pentapeptide-transferase from Chlorobium phaeobacteroides (strain DSM 266 / SMG 266 / 2430).